The primary structure comprises 488 residues: MSRKLVIDPVTRIEGHGKVVVHLDDDNKVVDAKLHVVEFRGFEKFVQGHPFWEAPMFLQRICGICFVSHHLCGAKALDDMVGVGLKSGIHVTPTAEKMRRLGHYAQMLQSHTTAYFYLIVPEMLFGMDAPPAQRNVLGLIEANPDLVKRVVMLRKWGQEVIKAVFGKKMHGINSVPGGVNNNLSIAERDRFLNGEEGLLSVDQVIDYAQDGLRLFYDFHQKHRAQVDSFADVPALSMCLVGDDDNVDYYHGRLRIIDDDKHIVREFDYHDYLDHFSEAVEEWSYMKFPYLKELGREQGSVRVGPLGRMNVTKSLPTPLAQEALERFHAYTKGRTNNMTLHTNWARAIEILHAAEVVKELLHDPDLQKDQLVLTPPPNAWTGEGVGVVEAPRGTLLHHYRADERGNITFANLVVATTQNNQVMNRTVRSVAEDYLGGHGEITEGMMNAIEVGIRAYDPCLSCATHALGQMPLVVSVFDAAGRLIDERAR.

The Ni(2+) site is built by Cys62, Cys65, Cys458, and Cys461.

It belongs to the [NiFe]/[NiFeSe] hydrogenase large subunit family. In terms of assembly, tetramer of an alpha and a gamma subunits (flavin-containing dimer), and a delta and a nickel-containing beta subunits (hydrogenase dimer). The cofactor is FMN. Ni(2+) serves as cofactor.

Its subcellular location is the cytoplasm. It carries out the reaction H2 + NAD(+) = NADH + H(+). The chain is NAD-reducing hydrogenase HoxS subunit beta (hoxH) from Cupriavidus necator (strain ATCC 17699 / DSM 428 / KCTC 22496 / NCIMB 10442 / H16 / Stanier 337) (Ralstonia eutropha).